We begin with the raw amino-acid sequence, 281 residues long: Undecaprenyl-diphosphatase (281 aa).

8 helical membrane-spanning segments follow: residues 1–21, 45–65, 93–113, 125–145, 155–175, 195–215, 227–247, and 256–276; these read MNVL…FLPI, WTAF…IYFA, SKLG…GLVF, LIVI…SEVV, ISWL…VPGA, AARF…LLEF, FLVL…TIAF, and STNV…WMVF.

It belongs to the UppP family.

The protein localises to the cell inner membrane. The enzyme catalyses di-trans,octa-cis-undecaprenyl diphosphate + H2O = di-trans,octa-cis-undecaprenyl phosphate + phosphate + H(+). Catalyzes the dephosphorylation of undecaprenyl diphosphate (UPP). Confers resistance to bacitracin. The chain is Undecaprenyl-diphosphatase from Syntrophobacter fumaroxidans (strain DSM 10017 / MPOB).